The chain runs to 243 residues: Glutathione S-transferase U14 (243 aa).

The GST N-terminal domain maps to 5-87 (DTVKLIGCSD…YLDEAWPSDP (83 aa)). Glutathione-binding positions include 15–16 (DP), 44–45 (EK), 58–59 (KT), and 71–72 (ES). The 128-residue stretch at 93–220 (NAYDRASARF…MPTVEEVTEL (128 aa)) folds into the GST C-terminal domain. Threonine 159 bears the Phosphothreonine mark.

This sequence belongs to the GST superfamily. Tau family.

Its subcellular location is the cytoplasm. The protein resides in the cytosol. The catalysed reaction is RX + glutathione = an S-substituted glutathione + a halide anion + H(+). May be involved in the conjugation of reduced glutathione to a wide number of exogenous and endogenous hydrophobic electrophiles and have a detoxification role against certain herbicides. This chain is Glutathione S-transferase U14 (GSTU14), found in Arabidopsis thaliana (Mouse-ear cress).